The chain runs to 245 residues: Thiopurine S-methyltransferase (245 aa).

Residue Ser-14 is modified to Phosphoserine. Trp-29 to Phe-40 serves as a coordination point for S-adenosyl-L-methionine. Phe-40 contributes to the substrate binding site. Lys-58 carries the post-translational modification N6-acetyllysine. 3 residues coordinate S-adenosyl-L-methionine: Leu-69, Glu-90, and Arg-152.

Belongs to the class I-like SAM-binding methyltransferase superfamily. TPMT family. Monomer.

It localises to the cytoplasm. It catalyses the reaction S-adenosyl-L-methionine + a thiopurine = S-adenosyl-L-homocysteine + a thiopurine S-methylether.. This Equus caballus (Horse) protein is Thiopurine S-methyltransferase (TPMT).